Consider the following 216-residue polypeptide: PRA1 family protein B6 (216 aa).

Alanine 2 is subject to N-acetylalanine. 5 consecutive transmembrane segments (helical) span residues 83–103, 105–125, 135–155, 159–179, and 186–206; these read LVAI…FLLA, LAAS…LVIG, LGIL…GSLL, LAVG…EDLF, and IGSG…AAAI.

Belongs to the PRA1 family. As to quaternary structure, interacts with PRA1B1, PRA1B2, PRA1B3, PRA1B4, PRA1B5 and PRA1E. In terms of tissue distribution, expressed in hypocotyls, roots, lateral roots, lateral root caps, columella cells, leaves and stomata.

The protein localises to the endoplasmic reticulum membrane. Functionally, may be involved in both secretory and endocytic intracellular trafficking in the endosomal/prevacuolar compartments. This is PRA1 family protein B6 (PRA1B6) from Arabidopsis thaliana (Mouse-ear cress).